The following is a 317-amino-acid chain: 17-beta-hydroxysteroid dehydrogenase type 6 (317 aa).

An N-terminal signal peptide occupies residues 1–17 (MWLYLAAFVGLYYLLHW). An NAD(+)-binding site is contributed by 33–57 (FITGCDSGFGNLLARQLDARGLRVL). An N-linked (GlcNAc...) asparagine glycan is attached at Asn161. Residue Ser164 coordinates substrate. The active-site Proton acceptor is Tyr176. 2 N-linked (GlcNAc...) asparagine glycosylation sites follow: Asn215 and Asn256.

The protein belongs to the short-chain dehydrogenases/reductases (SDR) family. Detected in liver and prostate (at protein level). Detected in adult liver, lung, brain, placenta, prostate, adrenal gland, testis, mammary gland, spleen, spinal cord and uterus. Detected in caudate nucleus, and at lower levels in amygdala, corpus callosum, hippocampus, substantia nigra and thalamus. Detected in fetal lung, liver and brain.

Its subcellular location is the microsome membrane. It localises to the early endosome membrane. It carries out the reaction all-trans-retinol--[retinol-binding protein] + NAD(+) = all-trans-retinal--[retinol-binding protein] + NADH + H(+). The enzyme catalyses all-trans-retinol + NAD(+) = all-trans-retinal + NADH + H(+). It catalyses the reaction androsterone + NAD(+) = 5alpha-androstan-3,17-dione + NADH + H(+). The catalysed reaction is testosterone + NAD(+) = androst-4-ene-3,17-dione + NADH + H(+). It carries out the reaction 5alpha-androstane-3alpha,17beta-diol + NAD(+) = 17beta-hydroxy-5alpha-androstan-3-one + NADH + H(+). The enzyme catalyses 17beta-estradiol + NAD(+) = estrone + NADH + H(+). It catalyses the reaction 17beta-estradiol + NADP(+) = estrone + NADPH + H(+). The catalysed reaction is 3alpha-hydroxy-5alpha-pregnan-20-one + NAD(+) = 5alpha-pregnane-3,20-dione + NADH + H(+). It carries out the reaction 5alpha-androstane-3beta,17beta-diol + NAD(+) = 17beta-hydroxy-5alpha-androstan-3-one + NADH + H(+). The enzyme catalyses 3beta-hydroxy-5alpha-androstan-17-one + NAD(+) = 5alpha-androstan-3,17-dione + NADH + H(+). NAD-dependent oxidoreductase with broad substrate specificity that shows both oxidative and reductive activity (in vitro). Has 17-beta-hydroxysteroid dehydrogenase activity towards various steroids (in vitro). Converts 5-alpha-androstan-3-alpha,17-beta-diol to androsterone and estradiol to estrone (in vitro). Has 3-alpha-hydroxysteroid dehydrogenase activity towards androsterone (in vitro). Has retinol dehydrogenase activity towards all-trans-retinol (in vitro). Can convert androsterone to epi-androsterone. Androsterone is first oxidized to 5-alpha-androstane-3,17-dione and then reduced to epi-andosterone. Can act on both C-19 and C-21 3-alpha-hydroxysteroids. The protein is 17-beta-hydroxysteroid dehydrogenase type 6 (HSD17B6) of Homo sapiens (Human).